Here is a 364-residue protein sequence, read N- to C-terminus: Suberization-associated anionic peroxidase 1 (364 aa).

Positions 1–25 (MGFRLSHLSLALSFVALALAGVAIY) are cleaved as a signal peptide. N-linked (GlcNAc...) asparagine glycosylation is present at N36. Intrachain disulfides connect C81–C160 and C112–C117. The active-site Proton acceptor is H110. 4 residues coordinate Ca(2+): D111, V114, G116, and D118. Residues N127, N162, and N200 are each glycosylated (N-linked (GlcNAc...) asparagine). 2 cysteine pairs are disulfide-bonded: C167–C353 and C246–C265. P209 provides a ligand contact to substrate. N214 and N226 each carry an N-linked (GlcNAc...) asparagine glycan. Residue H239 participates in heme b binding. T240 provides a ligand contact to Ca(2+). A glycan (N-linked (GlcNAc...) asparagine) is linked at N264. Ca(2+) is bound by residues D278, T280, and D285.

It belongs to the peroxidase family. Classical plant (class III) peroxidase subfamily. Requires Ca(2+) as cofactor. Heme b serves as cofactor.

It is found in the secreted. The enzyme catalyses 2 a phenolic donor + H2O2 = 2 a phenolic radical donor + 2 H2O. Functionally, removal of H(2)O(2), oxidation of toxic reductants, biosynthesis and degradation of lignin, suberization, auxin catabolism, response to environmental stresses such as wounding, pathogen attack and oxidative stress. These functions might be dependent on each isozyme/isoform in each plant tissue. Its function is as follows. Suggested to catalyze the deposition of the aromatic residues of suberin on the cell wall and thus play a role in cell-suberization. The chain is Suberization-associated anionic peroxidase 1 (TAP1) from Solanum lycopersicum (Tomato).